A 331-amino-acid chain; its full sequence is Probable cytosolic iron-sulfur protein assembly protein Ciao1 (331 aa).

WD repeat units lie at residues 12-51 (GHKG…WTTK), 57-96 (GHKR…ATLE), 97-136 (GHEN…EFEC), 142-181 (AHSQ…SDWD), 188-227 (SHTS…NEAG), 246-285 (LHTR…KRDA), and 297-331 (AHEQ…KLQE).

Belongs to the WD repeat CIA1 family.

Essential component of the cytosolic iron-sulfur (Fe/S) protein assembly machinery. Required for the maturation of extramitochondrial Fe/S proteins. This chain is Probable cytosolic iron-sulfur protein assembly protein Ciao1, found in Drosophila mojavensis (Fruit fly).